The chain runs to 345 residues: Aminopeptidase YpdE (345 aa).

The a divalent metal cation site is built by His62 and Asp166. Glu198 (proton acceptor) is an active-site residue. Glu199, Asp221, and His308 together coordinate a divalent metal cation.

This sequence belongs to the peptidase M42 family. Co(2+) is required as a cofactor. Requires Ni(2+) as cofactor. It depends on Mn(2+) as a cofactor. Cu(2+) serves as cofactor.

Has a broad aminopeptidase activity on non-blocked peptides by progressively cleaving amino acids off the peptide substrate. Aminopeptidase activity stops at the residue before the first proline in the peptide. Cannot cleave when proline is the first N-terminal residue. This is Aminopeptidase YpdE (ypdE) from Escherichia coli (strain K12).